Reading from the N-terminus, the 1125-residue chain is Phytochrome A (1125 aa).

Low complexity-rich tracts occupy residues 1 to 14 (MSSS…SNSA) and 39 to 48 (SGSSFDYSSS). 2 disordered regions span residues 1-22 (MSSS…SARI) and 38-64 (ESGS…PRSD). A GAF domain is found at 218–401 (SMERLCDTMV…VFAIHVNKEL (184 aa)). Cys-323 contributes to the phytochromobilin binding site. PAS domains follow at residues 617-687 (VTSE…LQGK) and 750-821 (DYKA…VNLG). The 217-residue stretch at 901-1117 (YLKKQIWNPL…SFIISVELAG (217 aa)) folds into the Histidine kinase domain.

It belongs to the phytochrome family. Homodimer. Contains one covalently linked phytochromobilin chromophore.

Functionally, regulatory photoreceptor which exists in two forms that are reversibly interconvertible by light: the Pr form that absorbs maximally in the red region of the spectrum and the Pfr form that absorbs maximally in the far-red region. Photoconversion of Pr to Pfr induces an array of morphogenic responses, whereas reconversion of Pfr to Pr cancels the induction of those responses. Pfr controls the expression of a number of nuclear genes including those encoding the small subunit of ribulose-bisphosphate carboxylase, chlorophyll A/B binding protein, protochlorophyllide reductase, rRNA, etc. It also controls the expression of its own gene(s) in a negative feedback fashion. The protein is Phytochrome A (PHYA) of Populus tremuloides (Quaking aspen).